The following is a 563-amino-acid chain: (R)-mandelonitrile lyase 2 (563 aa).

The first 27 residues, 1–27 (MEKSTMSAILLVLYIFVLHLQYSEVHS), serve as a signal peptide directing secretion. FAD-binding positions include 63-64 (TS), 82-83 (ER), V129, T133, and 137-140 (NAGV). Residues N145 and N162 are each glycosylated (N-linked (GlcNAc...) asparagine). V244 is an FAD binding site. C355 contributes to the substrate binding site. N-linked (GlcNAc...) asparagine glycosylation is found at N379 and N419. The cysteines at positions 426 and 477 are disulfide-linked. Y484 lines the substrate pocket. Residues 485 to 486 (WH) and G514 each bind FAD. The active-site Proton donor is H486. The active-site Proton acceptor is the H524. Residue 525–526 (PQ) coordinates FAD.

Belongs to the GMC oxidoreductase family. Monomer. It depends on FAD as a cofactor. In terms of processing, glycosylated. Deglycosylation does not affect the enzymatic activity.

It catalyses the reaction (R)-mandelonitrile = benzaldehyde + hydrogen cyanide. Involved in cyanogenesis, the release of HCN from injured tissues. Catalyzes the stereospecific addition of HCN to a variety of aldehydes in vitro. Has no oxidase activity. The redox properties of the FAD cofactor appear to be unimportant for catalysis. In Prunus dulcis (Almond), this protein is (R)-mandelonitrile lyase 2 (MDL2).